Reading from the N-terminus, the 365-residue chain is Chorismate synthase (365 aa).

Arg-47 is an NADP(+) binding site. FMN-binding positions include 124 to 126 (RAS), Gly-287, 302 to 306 (KPTAT), and Arg-328. Residues 266-290 (FIKSDDSSKLRTTSNNSGGIQGGIS) form a disordered region.

Belongs to the chorismate synthase family. In terms of assembly, homotetramer. FMNH2 serves as cofactor.

It carries out the reaction 5-O-(1-carboxyvinyl)-3-phosphoshikimate = chorismate + phosphate. It participates in metabolic intermediate biosynthesis; chorismate biosynthesis; chorismate from D-erythrose 4-phosphate and phosphoenolpyruvate: step 7/7. In terms of biological role, catalyzes the anti-1,4-elimination of the C-3 phosphate and the C-6 proR hydrogen from 5-enolpyruvylshikimate-3-phosphate (EPSP) to yield chorismate, which is the branch point compound that serves as the starting substrate for the three terminal pathways of aromatic amino acid biosynthesis. This reaction introduces a second double bond into the aromatic ring system. This chain is Chorismate synthase, found in Prochlorococcus marinus (strain MIT 9301).